The primary structure comprises 129 residues: Small ribosomal subunit protein uS9 (129 aa).

Belongs to the universal ribosomal protein uS9 family.

In Wolinella succinogenes (strain ATCC 29543 / DSM 1740 / CCUG 13145 / JCM 31913 / LMG 7466 / NCTC 11488 / FDC 602W) (Vibrio succinogenes), this protein is Small ribosomal subunit protein uS9.